Here is a 102-residue protein sequence, read N- to C-terminus: MTEHNHDAELTINNEEELLTLYDENGNEVLYRKMLEFYHPEFKKEYVVLAEEGAQSDDEDMIELVPMINEPDESGDGGKLVPIETDEEWDMIEEVVNTEINE.

The protein belongs to the UPF0473 family.

The protein is UPF0473 protein SERP1179 of Staphylococcus epidermidis (strain ATCC 35984 / DSM 28319 / BCRC 17069 / CCUG 31568 / BM 3577 / RP62A).